The primary structure comprises 437 residues: Transmembrane protease serine 4 (437 aa).

Residues 1 to 32 (MLQDPDSDQPLNSLDVKPLRKPRIPMETFRKV) lie on the Cytoplasmic side of the membrane. A helical; Signal-anchor for type II membrane protein membrane pass occupies residues 33–53 (GIPIIIALLSLASIIIVVVLI). Residues 54 to 437 (KVILDKYYFL…WIYNVWKAEL (384 aa)) lie on the Extracellular side of the membrane. The LDL-receptor class A domain maps to 61–93 (YFLCGQPLHFIPRKQLCDGELDCPLGEDEEHCV). 8 cysteine pairs are disulfide-bonded: Cys-64-Cys-83, Cys-77-Cys-92, Cys-127-Cys-183, Cys-140-Cys-193, Cys-196-Cys-310, Cys-230-Cys-246, Cys-356-Cys-372, and Cys-383-Cys-410. Positions 94–204 (KSFPEGPAVA…ACGKSLKTPR (111 aa)) constitute an SRCR domain. Asn-130 and Asn-178 each carry an N-linked (GlcNAc...) asparagine glycan. In terms of domain architecture, Peptidase S1 spans 205 to 434 (VVGVEEASVD…YLNWIYNVWK (230 aa)). Active-site charge relay system residues include His-245 and Asp-290. Catalysis depends on Ser-387, which acts as the Charge relay system.

Belongs to the peptidase S1 family. In terms of processing, proteolytically processed; probably by an autocatalytic mechanism. In terms of tissue distribution, high levels in pancreatic, gastric, colorectal and ampullary cancer. Very weak expression in normal gastrointestinal and urogenital tract. Coexpressed with ACE2 within mature enterocytes.

The protein resides in the cell membrane. It localises to the secreted. In terms of biological role, plasma membrane-anchored serine protease that directly induces processing of pro-uPA/PLAU into the active form through proteolytic activity. Seems to be capable of activating ENaC. (Microbial infection) In gut epithelial cells, facilitates human coronavirus SARS-CoV-2 infection through, at least, the cleavage of coronavirus spike glycoproteins which activates the glycoprotein for host cell entry. The sequence is that of Transmembrane protease serine 4 from Homo sapiens (Human).